We begin with the raw amino-acid sequence, 375 residues long: Chaperone protein DnaJ (375 aa).

One can recognise a J domain in the interval 5–70 (DYYEVLGVNR…RKRASYDQFG (66 aa)). The segment at 133 to 211 (GLSRTIKVPT…CHGQGRQQQT (79 aa)) adopts a CR-type zinc-finger fold. Zn(2+)-binding residues include Cys-146, Cys-149, Cys-163, Cys-166, Cys-185, Cys-188, Cys-199, and Cys-202. 4 CXXCXGXG motif repeats span residues 146–153 (CKTCNGSG), 163–170 (CPRCNGSG), 185–192 (CSVCRGRG), and 199–206 (CTDCHGQG).

Belongs to the DnaJ family. Homodimer. The cofactor is Zn(2+).

The protein localises to the cytoplasm. Its function is as follows. Participates actively in the response to hyperosmotic and heat shock by preventing the aggregation of stress-denatured proteins and by disaggregating proteins, also in an autonomous, DnaK-independent fashion. Unfolded proteins bind initially to DnaJ; upon interaction with the DnaJ-bound protein, DnaK hydrolyzes its bound ATP, resulting in the formation of a stable complex. GrpE releases ADP from DnaK; ATP binding to DnaK triggers the release of the substrate protein, thus completing the reaction cycle. Several rounds of ATP-dependent interactions between DnaJ, DnaK and GrpE are required for fully efficient folding. Also involved, together with DnaK and GrpE, in the DNA replication of plasmids through activation of initiation proteins. This Coxiella burnetii (strain CbuK_Q154) (Coxiella burnetii (strain Q154)) protein is Chaperone protein DnaJ.